Here is a 368-residue protein sequence, read N- to C-terminus: DNA replication and repair protein RecF (368 aa).

Glycine 30–threonine 37 contributes to the ATP binding site.

This sequence belongs to the RecF family.

It localises to the cytoplasm. In terms of biological role, the RecF protein is involved in DNA metabolism; it is required for DNA replication and normal SOS inducibility. RecF binds preferentially to single-stranded, linear DNA. It also seems to bind ATP. This chain is DNA replication and repair protein RecF, found in Xanthomonas campestris pv. campestris (strain 8004).